We begin with the raw amino-acid sequence, 394 residues long: Elongation factor Tu (394 aa).

Positions 10–204 (KPHVNVGTIG…FLDSYIPEPE (195 aa)) constitute a tr-type G domain. The segment at 19 to 26 (GHVDHGKT) is G1. Residue 19–26 (GHVDHGKT) participates in GTP binding. A Mg(2+)-binding site is contributed by threonine 26. A G2 region spans residues 60 to 64 (GITIN). Residues 81-84 (DCPG) form a G3 region. GTP-binding positions include 81–85 (DCPGH) and 136–139 (NKCD). The tract at residues 136-139 (NKCD) is G4. The tract at residues 174 to 176 (SAL) is G5.

It belongs to the TRAFAC class translation factor GTPase superfamily. Classic translation factor GTPase family. EF-Tu/EF-1A subfamily. Monomer.

The protein resides in the cytoplasm. It catalyses the reaction GTP + H2O = GDP + phosphate + H(+). In terms of biological role, GTP hydrolase that promotes the GTP-dependent binding of aminoacyl-tRNA to the A-site of ribosomes during protein biosynthesis. This chain is Elongation factor Tu, found in Salmonella arizonae (strain ATCC BAA-731 / CDC346-86 / RSK2980).